The chain runs to 749 residues: Protein SEY1 homolog 2 (749 aa).

The Cytoplasmic portion of the chain corresponds to 1-671 (MIKNYGDRYH…QKHKQDFLQN (671 aa)). The GB1/RHD3-type G domain occupies 40–265 (GKNYNIVSII…YEKNVRWSDM (226 aa)). 50-57 (GSQSTGKS) is a binding site for GTP. A coiled-coil region spans residues 445-465 (NQLKAFVEAQLATFKQQLDNI). Residues 672–692 (IPKPFWFLLLFFMYDDVLRWM) traverse the membrane as a helical segment. At 693-695 (GNP) the chain is on the lumenal side. A helical membrane pass occupies residues 696 to 716 (LFLYPILIILCFVGFCIAIGL). Residues 717–749 (HSLPKLAFQWVFRTLNQAVIPIIFGGISKLKGS) lie on the Cytoplasmic side of the membrane.

This sequence belongs to the TRAFAC class dynamin-like GTPase superfamily. GB1/RHD3 GTPase family. RHD3 subfamily.

It localises to the endoplasmic reticulum membrane. In terms of biological role, probable GTP-binding protein that may be involved in cell development. In Paramecium tetraurelia, this protein is Protein SEY1 homolog 2.